The following is a 309-amino-acid chain: Homoserine O-succinyltransferase (309 aa).

The Acyl-thioester intermediate role is filled by cysteine 142. 2 residues coordinate substrate: lysine 163 and serine 192. Histidine 235 functions as the Proton acceptor in the catalytic mechanism. Glutamate 237 is a catalytic residue. Arginine 249 serves as a coordination point for substrate.

This sequence belongs to the MetA family. In terms of assembly, homodimer.

Its subcellular location is the cytoplasm. It carries out the reaction L-homoserine + succinyl-CoA = O-succinyl-L-homoserine + CoA. It participates in amino-acid biosynthesis; L-methionine biosynthesis via de novo pathway; O-succinyl-L-homoserine from L-homoserine: step 1/1. In terms of biological role, transfers a succinyl group from succinyl-CoA to L-homoserine, forming succinyl-L-homoserine. The chain is Homoserine O-succinyltransferase from Escherichia coli (strain SE11).